Consider the following 255-residue polypeptide: 5'-nucleotidase SurE (255 aa).

Positions 8, 9, 40, and 93 each coordinate a divalent metal cation.

It belongs to the SurE nucleotidase family. A divalent metal cation is required as a cofactor.

The protein localises to the cytoplasm. It catalyses the reaction a ribonucleoside 5'-phosphate + H2O = a ribonucleoside + phosphate. Its function is as follows. Nucleotidase that shows phosphatase activity on nucleoside 5'-monophosphates. This is 5'-nucleotidase SurE from Rhodopseudomonas palustris (strain BisB5).